The primary structure comprises 571 residues: Adenine deaminase (571 aa).

It belongs to the metallo-dependent hydrolases superfamily. Adenine deaminase family. Mn(2+) is required as a cofactor.

The catalysed reaction is adenine + H2O + H(+) = hypoxanthine + NH4(+). The chain is Adenine deaminase from Dehalococcoides mccartyi (strain ATCC BAA-2100 / JCM 16839 / KCTC 5957 / BAV1).